The sequence spans 428 residues: Histidine--tRNA ligase (428 aa).

The protein belongs to the class-II aminoacyl-tRNA synthetase family. Homodimer.

It localises to the cytoplasm. The enzyme catalyses tRNA(His) + L-histidine + ATP = L-histidyl-tRNA(His) + AMP + diphosphate + H(+). This Bordetella pertussis (strain Tohama I / ATCC BAA-589 / NCTC 13251) protein is Histidine--tRNA ligase.